The sequence spans 373 residues: AA9 family lytic polysaccharide monooxygenase A (373 aa).

A signal peptide spans 1-20; it reads MKSSTFGMLALAAAAKLVSA. Position 21 (histidine 21) interacts with Cu(2+). A disordered region spans residues 36-55; sequence EGNSQSGYIRSPPSNSPITD. Cysteine 63 and cysteine 183 are disulfide-bonded. Histidine 102 serves as a coordination point for Cu(2+). Positions 169 and 178 each coordinate O2. Residue tyrosine 180 participates in Cu(2+) binding. A disordered region spans residues 234–333; sequence GASGSSSSSS…NSVPQPSSNA (100 aa). 2 stretches are compositionally biased toward low complexity: residues 235–262 and 270–323; these read ASGSSSSSSSSASASAPAPTSAAPAPSS and PATS…AAPT. Residues 324–333 are compositionally biased toward polar residues; the sequence is NSVPQPSSNA. A CBM1 domain is found at 335 to 371; it reads GAVKEWYQCGGLNYSGSTQCEEGLTCKKWNPYYHQCV. A glycan (N-linked (GlcNAc...) asparagine) is linked at asparagine 347.

This sequence belongs to the polysaccharide monooxygenase AA9 family. Requires Cu(2+) as cofactor.

The protein localises to the secreted. It carries out the reaction [(1-&gt;4)-beta-D-glucosyl]n+m + reduced acceptor + O2 = 4-dehydro-beta-D-glucosyl-[(1-&gt;4)-beta-D-glucosyl]n-1 + [(1-&gt;4)-beta-D-glucosyl]m + acceptor + H2O.. Lytic polysaccharide monooxygenase (LPMO) that depolymerizes crystalline and amorphous polysaccharides via the oxidation of scissile alpha- or beta-(1-4)-glycosidic bonds, yielding exclusively C4 oxidation products. Catalysis by LPMOs requires the reduction of the active-site copper from Cu(II) to Cu(I) by a reducing agent and H(2)O(2) or O(2) as a cosubstrate. In addition to cellulose, also cleaves the beta-(1!4)-glucan backbone of tamarind xyloglucan, but only next to unsubstituted glucosyl units. The polypeptide is AA9 family lytic polysaccharide monooxygenase A (Aspergillus tamarii).